The sequence spans 227 residues: 7-cyano-7-deazaguanine synthase (227 aa).

An ATP-binding site is contributed by 9–19 (LSGGLDSATVL). C189, C199, C202, and C205 together coordinate Zn(2+).

This sequence belongs to the QueC family. It depends on Zn(2+) as a cofactor.

The catalysed reaction is 7-carboxy-7-deazaguanine + NH4(+) + ATP = 7-cyano-7-deazaguanine + ADP + phosphate + H2O + H(+). It participates in purine metabolism; 7-cyano-7-deazaguanine biosynthesis. In terms of biological role, catalyzes the ATP-dependent conversion of 7-carboxy-7-deazaguanine (CDG) to 7-cyano-7-deazaguanine (preQ(0)). The sequence is that of 7-cyano-7-deazaguanine synthase from Cupriavidus metallidurans (strain ATCC 43123 / DSM 2839 / NBRC 102507 / CH34) (Ralstonia metallidurans).